The sequence spans 139 residues: MNFKYIFAVSFLIASAYARSVQNDEQSLSQRDVLEEESLREIRGIGGVLLSAGKAALKGLAKVLAEKYANGKRTAEEHEVMKRLEAVMRDLDSLDHPEEASERETRGFNQDEIAKEKRILGPVLGLVGNALGGLIKKIG.

An N-terminal signal peptide occupies residues 1–18; it reads MNFKYIFAVSFLIASAYA. The propeptide occupies 19–43; that stretch reads RSVQNDEQSLSQRDVLEEESLREIR. Residue asparagine 70 is modified to Asparagine amide. Positions 74–118 are excised as a propeptide; it reads TAEEHEVMKRLEAVMRDLDSLDHPEEASERETRGFNQDEIAKEKR. An Isoleucine amide modification is found at isoleucine 138.

Belongs to the bombinin family. As to expression, expressed by the skin glands.

It is found in the secreted. In terms of biological role, maximin-4 shows antibacterial activity against both Gram-positive and Gram-negative bacteria. It also shows antimicrobial activity against the fungus C.albicans, but not against A.flavus nor P.uticale. It has little hemolytic activity. It does not possess a significant cytotoxicity against tumor cell lines. It does not possess a significant anti-HIV activity. Its function is as follows. Maximin-H3 shows antibacterial activity against both Gram-positive and Gram-negative bacteria. It also shows antimicrobial activity against the fungus C.albicans. Shows strong hemolytic activity. The polypeptide is Maximins 4/H3 type 5 (Bombina maxima (Giant fire-bellied toad)).